A 189-amino-acid polypeptide reads, in one-letter code: dCTP deaminase (189 aa).

Residues 112–117, 136–138, Gln-157, Tyr-171, and Gln-181 each bind dCTP; these read KSTYAR and TLE. The Proton donor/acceptor role is filled by Glu-138.

This sequence belongs to the dCTP deaminase family. Homotrimer.

The catalysed reaction is dCTP + H2O + H(+) = dUTP + NH4(+). It functions in the pathway pyrimidine metabolism; dUMP biosynthesis; dUMP from dCTP (dUTP route): step 1/2. In terms of biological role, catalyzes the deamination of dCTP to dUTP. This chain is dCTP deaminase, found in Xanthomonas oryzae pv. oryzae (strain MAFF 311018).